The following is a 439-amino-acid chain: Methylenetetrahydrofolate--tRNA-(uracil-5-)-methyltransferase TrmFO (439 aa).

7-12 is a binding site for FAD; sequence GAGLAG.

The protein belongs to the MnmG family. TrmFO subfamily. FAD serves as cofactor.

It localises to the cytoplasm. The catalysed reaction is uridine(54) in tRNA + (6R)-5,10-methylene-5,6,7,8-tetrahydrofolate + NADH + H(+) = 5-methyluridine(54) in tRNA + (6S)-5,6,7,8-tetrahydrofolate + NAD(+). It catalyses the reaction uridine(54) in tRNA + (6R)-5,10-methylene-5,6,7,8-tetrahydrofolate + NADPH + H(+) = 5-methyluridine(54) in tRNA + (6S)-5,6,7,8-tetrahydrofolate + NADP(+). Catalyzes the folate-dependent formation of 5-methyl-uridine at position 54 (M-5-U54) in all tRNAs. The chain is Methylenetetrahydrofolate--tRNA-(uracil-5-)-methyltransferase TrmFO from Heliobacterium modesticaldum (strain ATCC 51547 / Ice1).